A 209-amino-acid polypeptide reads, in one-letter code: Ribosomal RNA large subunit methyltransferase E (209 aa).

S-adenosyl-L-methionine contacts are provided by G63, W65, D83, D99, and D124. The Proton acceptor role is filled by K164.

It belongs to the class I-like SAM-binding methyltransferase superfamily. RNA methyltransferase RlmE family.

It is found in the cytoplasm. It catalyses the reaction uridine(2552) in 23S rRNA + S-adenosyl-L-methionine = 2'-O-methyluridine(2552) in 23S rRNA + S-adenosyl-L-homocysteine + H(+). Its function is as follows. Specifically methylates the uridine in position 2552 of 23S rRNA at the 2'-O position of the ribose in the fully assembled 50S ribosomal subunit. The polypeptide is Ribosomal RNA large subunit methyltransferase E (Aliivibrio fischeri (strain MJ11) (Vibrio fischeri)).